Reading from the N-terminus, the 213-residue chain is dTTP/UTP pyrophosphatase (213 aa).

Aspartate 92 (proton acceptor) is an active-site residue.

Belongs to the Maf family. YhdE subfamily. Requires a divalent metal cation as cofactor.

Its subcellular location is the cytoplasm. It carries out the reaction dTTP + H2O = dTMP + diphosphate + H(+). The enzyme catalyses UTP + H2O = UMP + diphosphate + H(+). Functionally, nucleoside triphosphate pyrophosphatase that hydrolyzes dTTP and UTP. May have a dual role in cell division arrest and in preventing the incorporation of modified nucleotides into cellular nucleic acids. The sequence is that of dTTP/UTP pyrophosphatase from Granulibacter bethesdensis (strain ATCC BAA-1260 / CGDNIH1).